Reading from the N-terminus, the 268-residue chain is Tryptophan synthase alpha chain (268 aa).

Catalysis depends on proton acceptor residues glutamate 49 and aspartate 60.

It belongs to the TrpA family. In terms of assembly, tetramer of two alpha and two beta chains.

It catalyses the reaction (1S,2R)-1-C-(indol-3-yl)glycerol 3-phosphate + L-serine = D-glyceraldehyde 3-phosphate + L-tryptophan + H2O. It participates in amino-acid biosynthesis; L-tryptophan biosynthesis; L-tryptophan from chorismate: step 5/5. Functionally, the alpha subunit is responsible for the aldol cleavage of indoleglycerol phosphate to indole and glyceraldehyde 3-phosphate. The chain is Tryptophan synthase alpha chain from Vibrio metschnikovii.